Consider the following 707-residue polypeptide: Polyribonucleotide nucleotidyltransferase (707 aa).

2 residues coordinate Mg(2+): Asp485 and Asp491. In terms of domain architecture, KH spans 552 to 611; the sequence is PRIYTMKIDPKKIKDVIGKGGATIRTLTEETGTSIDIDDDGTVKIAAIDGNAVKEVMARI. Residues 621–689 enclose the S1 motif domain; the sequence is GAVYTGKVTR…RQGRIRLTMK (69 aa).

This sequence belongs to the polyribonucleotide nucleotidyltransferase family. As to quaternary structure, component of the RNA degradosome, which is a multiprotein complex involved in RNA processing and mRNA degradation. The cofactor is Mg(2+).

It localises to the cytoplasm. The catalysed reaction is RNA(n+1) + phosphate = RNA(n) + a ribonucleoside 5'-diphosphate. In terms of biological role, involved in mRNA degradation. Catalyzes the phosphorolysis of single-stranded polyribonucleotides processively in the 3'- to 5'-direction. This Actinobacillus succinogenes (strain ATCC 55618 / DSM 22257 / CCUG 43843 / 130Z) protein is Polyribonucleotide nucleotidyltransferase.